Consider the following 632-residue polypeptide: tRNA uridine 5-carboxymethylaminomethyl modification enzyme MnmG (632 aa).

FAD-binding positions include 15 to 20, I127, and S182; that span reads GAGHAG. 276–290 is a binding site for NAD(+); that stretch reads GPRYCPSIEDKIVRF. FAD is bound at residue Q373.

It belongs to the MnmG family. As to quaternary structure, homodimer. Heterotetramer of two MnmE and two MnmG subunits. FAD serves as cofactor.

The protein localises to the cytoplasm. In terms of biological role, NAD-binding protein involved in the addition of a carboxymethylaminomethyl (cmnm) group at the wobble position (U34) of certain tRNAs, forming tRNA-cmnm(5)s(2)U34. In Streptococcus pyogenes serotype M3 (strain SSI-1), this protein is tRNA uridine 5-carboxymethylaminomethyl modification enzyme MnmG.